A 648-amino-acid chain; its full sequence is ATP-dependent DNA helicase Q1 (648 aa).

Residues 100–275 (INVTMARKDI…QKILCVGKCL (176 aa)) enclose the Helicase ATP-binding domain. 113–120 (MPTGGGKS) serves as a coordination point for ATP. Residues 219–222 (DEVH) carry the DEVH box motif. Positions 299–451 (DFTEDIVKLI…EMVSYCQNVS (153 aa)) constitute a Helicase C-terminal domain. The Zn(2+) site is built by C453, C471, C475, and C478. Residues K514 and K522 each carry the N6-acetyllysine modification. S597 carries the phosphoserine modification. A disordered region spans residues 601–648 (ALSEARQVEQVDSKGEEQSSGNSQKSKSRLQPSGSKNAGAKKRKLDDA). Residues 606–617 (RQVEQVDSKGEE) show a composition bias toward basic and acidic residues. Residues 618–636 (QSSGNSQKSKSRLQPSGSK) show a composition bias toward polar residues. S633 is modified (phosphoserine). The span at 639 to 648 (GAKKRKLDDA) shows a compositional bias: basic residues.

The protein belongs to the helicase family. RecQ subfamily. May form homodimers or higher order oligomers. Interacts with EXO1. Interacts with MLH1. Interacts with PARP1. Mg(2+) is required as a cofactor. Mn(2+) serves as cofactor. Requires Zn(2+) as cofactor. Expressed in all tissues examined. In terms of tissue distribution, only expressed in spermatocytes. Expression increases at pachytene (17 days old) and decreases after completion of meiosis II (7 weeks old).

It localises to the nucleus. The catalysed reaction is Couples ATP hydrolysis with the unwinding of duplex DNA by translocating in the 3'-5' direction.. The enzyme catalyses ATP + H2O = ADP + phosphate + H(+). It carries out the reaction dATP + H2O = dADP + phosphate + H(+). In terms of biological role, DNA helicase that plays a role in DNA damage repair and genome stability. Exhibits a magnesium- and ATP-dependent DNA-helicase activity that unwinds single- and double-stranded DNA in a 3'-5' direction. Plays a role in restoring regressed replication forks. Required to restart stalled replication forks induced by abortive topoisomerase 1 and 2 lesions. May play a role in the repair of DNA that is damaged by ultraviolet light or other mutagens. The polypeptide is ATP-dependent DNA helicase Q1 (Recql) (Mus musculus (Mouse)).